Consider the following 373-residue polypeptide: Probable tRNA sulfurtransferase (373 aa).

The 105-residue stretch at 54 to 158 (NKNIEELSKV…NDVAYFYYKI (105 aa)) folds into the THUMP domain. Residues 176–177 (LF), 201–202 (NF), K256, G278, and Q287 contribute to the ATP site.

This sequence belongs to the ThiI family.

Its subcellular location is the cytoplasm. It carries out the reaction [ThiI sulfur-carrier protein]-S-sulfanyl-L-cysteine + a uridine in tRNA + 2 reduced [2Fe-2S]-[ferredoxin] + ATP + H(+) = [ThiI sulfur-carrier protein]-L-cysteine + a 4-thiouridine in tRNA + 2 oxidized [2Fe-2S]-[ferredoxin] + AMP + diphosphate. The catalysed reaction is [ThiS sulfur-carrier protein]-C-terminal Gly-Gly-AMP + S-sulfanyl-L-cysteinyl-[cysteine desulfurase] + AH2 = [ThiS sulfur-carrier protein]-C-terminal-Gly-aminoethanethioate + L-cysteinyl-[cysteine desulfurase] + A + AMP + 2 H(+). Its pathway is cofactor biosynthesis; thiamine diphosphate biosynthesis. In terms of biological role, catalyzes the ATP-dependent transfer of a sulfur to tRNA to produce 4-thiouridine in position 8 of tRNAs, which functions as a near-UV photosensor. Also catalyzes the transfer of sulfur to the sulfur carrier protein ThiS, forming ThiS-thiocarboxylate. This is a step in the synthesis of thiazole, in the thiamine biosynthesis pathway. The sulfur is donated as persulfide by IscS. The polypeptide is Probable tRNA sulfurtransferase (Saccharolobus islandicus (strain L.S.2.15 / Lassen #1) (Sulfolobus islandicus)).